The primary structure comprises 185 residues: Ribosome maturation factor RimM (185 aa).

Residues serine 106–phenylalanine 185 enclose the PRC barrel domain.

Belongs to the RimM family. As to quaternary structure, binds ribosomal protein uS19.

It localises to the cytoplasm. Functionally, an accessory protein needed during the final step in the assembly of 30S ribosomal subunit, possibly for assembly of the head region. Essential for efficient processing of 16S rRNA. May be needed both before and after RbfA during the maturation of 16S rRNA. It has affinity for free ribosomal 30S subunits but not for 70S ribosomes. In Sodalis glossinidius (strain morsitans), this protein is Ribosome maturation factor RimM.